The chain runs to 301 residues: Bifunctional protein FolD (301 aa).

NADP(+) is bound by residues 166-168 (GKS), serine 191, and isoleucine 232.

The protein belongs to the tetrahydrofolate dehydrogenase/cyclohydrolase family. Homodimer.

It catalyses the reaction (6R)-5,10-methylene-5,6,7,8-tetrahydrofolate + NADP(+) = (6R)-5,10-methenyltetrahydrofolate + NADPH. The catalysed reaction is (6R)-5,10-methenyltetrahydrofolate + H2O = (6R)-10-formyltetrahydrofolate + H(+). The protein operates within one-carbon metabolism; tetrahydrofolate interconversion. Catalyzes the oxidation of 5,10-methylenetetrahydrofolate to 5,10-methenyltetrahydrofolate and then the hydrolysis of 5,10-methenyltetrahydrofolate to 10-formyltetrahydrofolate. The polypeptide is Bifunctional protein FolD (Orientia tsutsugamushi (strain Ikeda) (Rickettsia tsutsugamushi)).